An 847-amino-acid polypeptide reads, in one-letter code: Phenylalanine--tRNA ligase beta subunit (847 aa).

In terms of domain architecture, tRNA-binding spans 40–168 (FGIEGPVVVG…LDPEVGADAV (129 aa)). The region spanning 426–501 (ADAEPIRLPD…RIVGFDRIPS (76 aa)) is the B5 domain. Asp-479, Asp-485, Glu-488, and Glu-489 together coordinate Mg(2+). The region spanning 753 to 846 (AGFPAATQDL…AGQLFGAAIR (94 aa)) is the FDX-ACB domain.

It belongs to the phenylalanyl-tRNA synthetase beta subunit family. Type 1 subfamily. Tetramer of two alpha and two beta subunits. The cofactor is Mg(2+).

It is found in the cytoplasm. The catalysed reaction is tRNA(Phe) + L-phenylalanine + ATP = L-phenylalanyl-tRNA(Phe) + AMP + diphosphate + H(+). This chain is Phenylalanine--tRNA ligase beta subunit, found in Leifsonia xyli subsp. xyli (strain CTCB07).